A 546-amino-acid chain; its full sequence is Smad protein daf-8 (546 aa).

Positions 16–137 (AMAQKVLEET…YRWVELPTCQ (122 aa)) constitute an MH1 domain. Disordered stretches follow at residues 234–268 (LQQS…FIPN) and 292–317 (ENFS…PIEP). Residues 292 to 302 (ENFSSENNGNR) show a composition bias toward polar residues. The MH2 domain maps to 349 to 546 (WLKLIYYEEG…APPRICSSRT (198 aa)).

This sequence belongs to the dwarfin/SMAD family. In terms of assembly, homodimer. Interacts with R-SMAD daf-14 and co-SMAD daf-3. Interacts with orphan nuclear receptor nhr-69. Expressed in the excretory cell and gonadal distal tip cells (DTCs).

Its subcellular location is the cytoplasm. The protein resides in the nucleus. In terms of biological role, probably a receptor-regulated SMAD (R-SMAD) that is an intracellular signal transducer and transcriptional modulator activated by TGF-beta-like daf-7 signaling. Plays a role in TGF-beta-like daf-7 signaling in regulating entry into a developmentally arrested larval state known as dauer, in response to harsh environmental conditions; partially redundant with R-SMAD daf-14. Plays a role in inhibiting mitosis and promoting a switch to meiosis in the germ line, perhaps by down-regulating lag-2 transcription in the gonadal distal tip cells (DTCs). In cooperation with orphan nuclear receptor nhr-69 modulates the Insulin/IGF-1-like signaling (IIS) pathway, perhaps by regulating expression of the potassium channel exp-2, which in turn modulates the secretion of the insulin-like peptide daf-28. The polypeptide is Smad protein daf-8 (Caenorhabditis elegans).